The following is a 92-amino-acid chain: Sperm-specific protein Phi-1 (92 aa).

The interval 1–92 (MPSPTRRSSK…RVRAKKKKKK (92 aa)) is disordered. 2 stretches are compositionally biased toward basic residues: residues 7–19 (RSSKSRSKSRSRS) and 29–92 (AAKR…KKKK).

Sperm.

It is found in the nucleus. The protein localises to the chromosome. In terms of biological role, involved in nuclear basic protein transition: histones are replaced by spermatid specific proteins which are themselves replaced by protamines in late spermatids. This chain is Sperm-specific protein Phi-1, found in Mytilus edulis (Blue mussel).